Consider the following 346-residue polypeptide: Uricase (346 aa).

Residues 1-23 form a disordered region; that stretch reads MFATPLRQPTNASGARPAVSMDG. Residues Lys-39 and Thr-84 each act as charge relay system in the active site. Residues Thr-84, Asp-85, Phe-208, Arg-225, Val-273, Gln-274, and Asn-300 each contribute to the urate site. His-302 functions as the Charge relay system in the catalytic mechanism. The Microbody targeting signal motif lies at 344–346; it reads SHL.

This sequence belongs to the uricase family. Malpighian tubules.

It localises to the peroxisome. It carries out the reaction urate + O2 + H2O = 5-hydroxyisourate + H2O2. The protein operates within purine metabolism; urate degradation; (S)-allantoin from urate: step 1/3. With respect to regulation, repressed by 20-hydroxyecdysone. Its function is as follows. Catalyzes the oxidation of uric acid to 5-hydroxyisourate, which is further processed to form (S)-allantoin. The chain is Uricase (Uro) from Drosophila pseudoobscura pseudoobscura (Fruit fly).